The sequence spans 259 residues: Protein N-terminal and lysine N-methyltransferase efm7 (259 aa).

Residues tryptophan 53, 80–82, aspartate 102, tryptophan 138, and alanine 164 each bind S-adenosyl-L-methionine; that span reads GAA.

This sequence belongs to the class I-like SAM-binding methyltransferase superfamily. EFM7 family.

It is found in the cytoplasm. S-adenosyl-L-methionine-dependent protein methyltransferase that trimethylates the N-terminal glycine 'Gly-2' of elongation factor 1-alpha, before also catalyzing the mono- and dimethylation of 'Lys-3'. The polypeptide is Protein N-terminal and lysine N-methyltransferase efm7 (Emericella nidulans (strain FGSC A4 / ATCC 38163 / CBS 112.46 / NRRL 194 / M139) (Aspergillus nidulans)).